Consider the following 263-residue polypeptide: S-acyl fatty acid synthase thioesterase, medium chain (263 aa).

M1 is subject to N-acetylmethionine. Active-site residues include S101 and H237. The interval 262–263 (LT) is important for interaction with FASN.

Belongs to the thioesterase family. In terms of assembly, interacts (via C-terminus) with FASN.

It localises to the cytoplasm. The protein localises to the cytosol. It catalyses the reaction (9Z)-octadecenoyl-[ACP] + H2O = (9Z)-octadecenoate + holo-[ACP] + H(+). The enzyme catalyses decanoyl-CoA + H2O = decanoate + CoA + H(+). The catalysed reaction is dodecanoyl-CoA + H2O = dodecanoate + CoA + H(+). It carries out the reaction tetradecanoyl-CoA + H2O = tetradecanoate + CoA + H(+). It catalyses the reaction hexadecanoyl-CoA + H2O = hexadecanoate + CoA + H(+). In terms of biological role, contributes to the release of free fatty acids from fatty acid synthase (FASN). Has broad substrate specificity, giving rise to a range of free fatty acids with chain lengths between 10 and 16 carbon atoms (C10 - C16). The chain is S-acyl fatty acid synthase thioesterase, medium chain from Rattus norvegicus (Rat).